Consider the following 290-residue polypeptide: Ribosomal RNA small subunit methyltransferase A (290 aa).

6 residues coordinate S-adenosyl-L-methionine: N27, L29, G54, E75, D100, and N125.

It belongs to the class I-like SAM-binding methyltransferase superfamily. rRNA adenine N(6)-methyltransferase family. RsmA subfamily.

It is found in the cytoplasm. It catalyses the reaction adenosine(1518)/adenosine(1519) in 16S rRNA + 4 S-adenosyl-L-methionine = N(6)-dimethyladenosine(1518)/N(6)-dimethyladenosine(1519) in 16S rRNA + 4 S-adenosyl-L-homocysteine + 4 H(+). Its function is as follows. Specifically dimethylates two adjacent adenosines (A1518 and A1519) in the loop of a conserved hairpin near the 3'-end of 16S rRNA in the 30S particle. May play a critical role in biogenesis of 30S subunits. This is Ribosomal RNA small subunit methyltransferase A from Streptococcus thermophilus (strain ATCC BAA-250 / LMG 18311).